Reading from the N-terminus, the 185-residue chain is Ribose 1,5-bisphosphate phosphokinase PhnN (185 aa).

Residue 10–17 (GPSGSGKD) participates in ATP binding.

It belongs to the ribose 1,5-bisphosphokinase family.

It carries out the reaction alpha-D-ribose 1,5-bisphosphate + ATP = 5-phospho-alpha-D-ribose 1-diphosphate + ADP. It participates in metabolic intermediate biosynthesis; 5-phospho-alpha-D-ribose 1-diphosphate biosynthesis; 5-phospho-alpha-D-ribose 1-diphosphate from D-ribose 5-phosphate (route II): step 3/3. Its function is as follows. Catalyzes the phosphorylation of ribose 1,5-bisphosphate to 5-phospho-D-ribosyl alpha-1-diphosphate (PRPP). In Escherichia coli O157:H7, this protein is Ribose 1,5-bisphosphate phosphokinase PhnN.